Here is a 341-residue protein sequence, read N- to C-terminus: NADH-ubiquinone oxidoreductase chain 2 (341 aa).

Helical transmembrane passes span 8-28 (IFFIMLISGTLITISSNSWLG), 61-81 (FLTQAFASSILLFAIILMMMF), 95-117 (LLILSTLLLKSGAAPFHFWFPGV), 145-165 (LNINFFYFTILLSMIIGALGG), 195-215 (LLWLTYFLLYSILSMSIILMF), 238-258 (FFMFLNLLSLGGLPPFLGFLP), 266-286 (LVEMNQLFLLFIAVCLTLITL), and 320-340 (ILTMNFISIMGLLIITLIYLI).

This sequence belongs to the complex I subunit 2 family.

The protein resides in the mitochondrion inner membrane. The enzyme catalyses a ubiquinone + NADH + 5 H(+)(in) = a ubiquinol + NAD(+) + 4 H(+)(out). Functionally, core subunit of the mitochondrial membrane respiratory chain NADH dehydrogenase (Complex I) that is believed to belong to the minimal assembly required for catalysis. Complex I functions in the transfer of electrons from NADH to the respiratory chain. The immediate electron acceptor for the enzyme is believed to be ubiquinone. The chain is NADH-ubiquinone oxidoreductase chain 2 from Aedes aegypti (Yellowfever mosquito).